A 147-amino-acid chain; its full sequence is Hemoglobin subunit gamma-1 (147 aa).

Gly-2 carries the N-acetylglycine modification. The Globin domain maps to 3–147; that stretch reads HFTEEDKATI…VASALSSRYH (145 aa). Thr-13 is modified (phosphothreonine). 3 positions are modified to phosphoserine: Ser-45, Ser-51, and Ser-53. The residue at position 60 (Lys-60) is an N6-acetyllysine. His-64 is a binding site for heme b. Lys-83 carries the N6-acetyllysine modification. Heme b is bound at residue His-93. At Cys-94 the chain carries S-nitrosocysteine. Position 140 is a phosphoserine (Ser-140).

It belongs to the globin family. As to quaternary structure, heterotetramer of two alpha chains and two gamma chains in fetal hemoglobin (Hb F). Red blood cells.

Its function is as follows. Gamma chains make up the fetal hemoglobin F, in combination with alpha chains. This is Hemoglobin subunit gamma-1 (HBG1) from Gorilla gorilla gorilla (Western lowland gorilla).